The primary structure comprises 313 residues: Porphobilinogen deaminase 2 (313 aa).

Cys-246 is modified (S-(dipyrrolylmethanemethyl)cysteine).

This sequence belongs to the HMBS family. In terms of assembly, monomer. Dipyrromethane is required as a cofactor.

It catalyses the reaction 4 porphobilinogen + H2O = hydroxymethylbilane + 4 NH4(+). The protein operates within porphyrin-containing compound metabolism; protoporphyrin-IX biosynthesis; coproporphyrinogen-III from 5-aminolevulinate: step 2/4. Functionally, tetrapolymerization of the monopyrrole PBG into the hydroxymethylbilane pre-uroporphyrinogen in several discrete steps. The sequence is that of Porphobilinogen deaminase 2 (hemC2) from Streptomyces coelicolor (strain ATCC BAA-471 / A3(2) / M145).